Here is a 734-residue protein sequence, read N- to C-terminus: Photosystem I P700 chlorophyll a apoprotein A2 (734 aa).

A run of 8 helical transmembrane segments spans residues 46 to 69 (IFAS…FHVA), 135 to 158 (LYTG…LHLQ), 175 to 199 (LNHH…HVAI), 273 to 291 (MAHH…GHMY), 330 to 353 (IHFQ…QHMY), 369 to 395 (AALY…IFFI), 417 to 439 (AIKS…LYVH), and 517 to 535 (FLVH…LILV). Positions 559 and 568 each coordinate [4Fe-4S] cluster. A run of 2 helical transmembrane segments spans residues 575 to 596 (AFYL…YWHW) and 643 to 665 (LSVW…MFLI). Chlorophyll a contacts are provided by H654, M662, and Y670. W671 is a binding site for phylloquinone. The chain crosses the membrane as a helical span at residues 707-727 (LVGLAHFSVGYIFTYAAFLIA).

This sequence belongs to the PsaA/PsaB family. The PsaA/B heterodimer binds the P700 chlorophyll special pair and subsequent electron acceptors. PSI consists of a core antenna complex that captures photons, and an electron transfer chain that converts photonic excitation into a charge separation. The eukaryotic PSI reaction center is composed of at least 11 subunits. P700 is a chlorophyll a/chlorophyll a' dimer, A0 is one or more chlorophyll a, A1 is one or both phylloquinones and FX is a shared 4Fe-4S iron-sulfur center. serves as cofactor.

Its subcellular location is the plastid. It localises to the chloroplast thylakoid membrane. It carries out the reaction reduced [plastocyanin] + hnu + oxidized [2Fe-2S]-[ferredoxin] = oxidized [plastocyanin] + reduced [2Fe-2S]-[ferredoxin]. Its function is as follows. PsaA and PsaB bind P700, the primary electron donor of photosystem I (PSI), as well as the electron acceptors A0, A1 and FX. PSI is a plastocyanin-ferredoxin oxidoreductase, converting photonic excitation into a charge separation, which transfers an electron from the donor P700 chlorophyll pair to the spectroscopically characterized acceptors A0, A1, FX, FA and FB in turn. Oxidized P700 is reduced on the lumenal side of the thylakoid membrane by plastocyanin. This Chloranthus spicatus (Chulantree) protein is Photosystem I P700 chlorophyll a apoprotein A2.